Here is a 203-residue protein sequence, read N- to C-terminus: Imidazole glycerol phosphate synthase subunit HisH (203 aa).

Residues 1–203 (MIGIIDYGMG…KNFGEMIKCL (203 aa)) enclose the Glutamine amidotransferase type-1 domain. Cys-79 acts as the Nucleophile in catalysis. Residues His-181 and Glu-183 contribute to the active site.

Heterodimer of HisH and HisF.

Its subcellular location is the cytoplasm. The catalysed reaction is 5-[(5-phospho-1-deoxy-D-ribulos-1-ylimino)methylamino]-1-(5-phospho-beta-D-ribosyl)imidazole-4-carboxamide + L-glutamine = D-erythro-1-(imidazol-4-yl)glycerol 3-phosphate + 5-amino-1-(5-phospho-beta-D-ribosyl)imidazole-4-carboxamide + L-glutamate + H(+). It catalyses the reaction L-glutamine + H2O = L-glutamate + NH4(+). Its pathway is amino-acid biosynthesis; L-histidine biosynthesis; L-histidine from 5-phospho-alpha-D-ribose 1-diphosphate: step 5/9. In terms of biological role, IGPS catalyzes the conversion of PRFAR and glutamine to IGP, AICAR and glutamate. The HisH subunit catalyzes the hydrolysis of glutamine to glutamate and ammonia as part of the synthesis of IGP and AICAR. The resulting ammonia molecule is channeled to the active site of HisF. This Caldanaerobacter subterraneus subsp. tengcongensis (strain DSM 15242 / JCM 11007 / NBRC 100824 / MB4) (Thermoanaerobacter tengcongensis) protein is Imidazole glycerol phosphate synthase subunit HisH.